We begin with the raw amino-acid sequence, 455 residues long: tRNA modification GTPase MnmE (455 aa).

The (6S)-5-formyl-5,6,7,8-tetrahydrofolate site is built by Arg-24, Glu-86, and Arg-125. The region spanning Gly-220 to Gln-376 is the TrmE-type G domain. Asn-230 serves as a coordination point for K(+). GTP is bound by residues Asn-230–Ser-235, Thr-249–Thr-255, and Asp-274–Gly-277. Residue Ser-234 coordinates Mg(2+). The K(+) site is built by Thr-249, Leu-251, and Thr-254. Residue Thr-255 participates in Mg(2+) binding. A (6S)-5-formyl-5,6,7,8-tetrahydrofolate-binding site is contributed by Lys-455.

Belongs to the TRAFAC class TrmE-Era-EngA-EngB-Septin-like GTPase superfamily. TrmE GTPase family. In terms of assembly, homodimer. Heterotetramer of two MnmE and two MnmG subunits. It depends on K(+) as a cofactor.

It localises to the cytoplasm. Its function is as follows. Exhibits a very high intrinsic GTPase hydrolysis rate. Involved in the addition of a carboxymethylaminomethyl (cmnm) group at the wobble position (U34) of certain tRNAs, forming tRNA-cmnm(5)s(2)U34. The sequence is that of tRNA modification GTPase MnmE from Acaryochloris marina (strain MBIC 11017).